A 275-amino-acid chain; its full sequence is tRNA-splicing endonuclease subunit SEN34 (275 aa).

Catalysis depends on residues tyrosine 209, histidine 217, and lysine 250.

This sequence belongs to the tRNA-intron endonuclease family. Heterotetramer composed of SEN2, SEN15, SEN34 and SEN54. Interacts directly with SEN15.

The protein localises to the nucleus. Its subcellular location is the endomembrane system. It is found in the mitochondrion outer membrane. It catalyses the reaction pretRNA = a 3'-half-tRNA molecule with a 5'-OH end + a 5'-half-tRNA molecule with a 2',3'-cyclic phosphate end + an intron with a 2',3'-cyclic phosphate and a 5'-hydroxyl terminus.. Its function is as follows. Constitutes one of the two catalytic subunit of the tRNA-splicing endonuclease complex, a complex responsible for identification and cleavage of the splice sites in pre-tRNA. It cleaves pre-tRNA at the 5'- and 3'-splice sites to release the intron. The products are an intron and two tRNA half-molecules bearing 2',3'-cyclic phosphate and 5'-OH termini. There are no conserved sequences at the splice sites, but the intron is invariably located at the same site in the gene, placing the splice sites an invariant distance from the constant structural features of the tRNA body. It probably carries the active site for 3'-splice site cleavage. This chain is tRNA-splicing endonuclease subunit SEN34 (SEN34), found in Saccharomyces cerevisiae (strain ATCC 204508 / S288c) (Baker's yeast).